A 315-amino-acid polypeptide reads, in one-letter code: Protein FRA10AC1 homolog (315 aa).

Residue Met1 is modified to N-acetylmethionine. Positions Met1 to Val28 are disordered. A phosphoserine mark is found at Ser9 and Ser12. Lys36 bears the N6-acetyllysine mark. The segment covering Lys225–Lys235 has biased composition (basic residues). The disordered stretch occupies residues Lys225–Asp308. Composition is skewed to basic and acidic residues over residues Thr236–Arg245 and Glu255–Ala278. Residues Ser283 and Ser285 each carry the phosphoserine modification.

Interacts with ESS2.

It is found in the nucleus. Its function is as follows. May be involved in pre-mRNA splicing. The protein is Protein FRA10AC1 homolog (Fra10ac1) of Mus musculus (Mouse).